We begin with the raw amino-acid sequence, 188 residues long: HTH-type transcriptional regulator LmrA (188 aa).

Residues 4 to 64 form the HTH tetR-type domain; sequence GDSREKILSA…IEAVNEMKEY (61 aa). A DNA-binding region (H-T-H motif) is located at residues 27 to 46; it reads GLNQIIKESGAPKGSLYYHF.

Its function is as follows. Acts as a repressor of the lincomycin-resistance (lmrAB) and yxaGH operons. In Bacillus subtilis (strain 168), this protein is HTH-type transcriptional regulator LmrA (lmrA).